The primary structure comprises 617 residues: Sodium-coupled monocarboxylate transporter 2 (617 aa).

Over 1–5 the chain is Extracellular; sequence MEVKN. Residues 6–26 form a helical membrane-spanning segment; that stretch reads FAVWDYVVFAALFIISSGIGV. The Cytoplasmic segment spans residues 27-47; the sequence is FYAIKERKKATSREFLVGGRQ. A helical membrane pass occupies residues 48 to 68; that stretch reads MSFGPVALSLTASFMSAVTVL. The Extracellular segment spans residues 69–80; that stretch reads GTPADVYRFGAS. The chain crosses the membrane as a helical span at residues 81–101; the sequence is FVLFFITYGLVIILTSELFLP. The Cytoplasmic segment spans residues 102–128; it reads VFYRSGITSTYEYLQLRFNKPVRYAAT. Residues 129 to 149 form a helical membrane-spanning segment; the sequence is VIYIVQTILYTGVVVYAPALA. Over 150-157 the chain is Extracellular; the sequence is LNQVTGFD. The helical transmembrane segment at 158–178 threads the bilayer; it reads LWGSVFATGIVCTFYCTLGGL. Residues 179 to 180 lie on the Cytoplasmic side of the membrane; the sequence is KA. A helical transmembrane segment spans residues 181–201; it reads VVWTDAFQMVVMIVGFLTVLI. Residues 202-235 are Extracellular-facing; that stretch reads QGSTYAGGLHNVLEQAENGSRLNIFDFDIDPLRR. The N-linked (GlcNAc...) asparagine glycan is linked to Asn-219. Residues 236–256 traverse the membrane as a helical segment; that stretch reads HTFWTISVGGTFTWLGIYGVN. Residues 257–273 are Cytoplasmic-facing; that stretch reads QSTIQRCISCKTEKHAK. A helical transmembrane segment spans residues 274–294; the sequence is LALYFNLLGLWIILLCAVFSG. Topologically, residues 295 to 334 are extracellular; sequence LTMYAHFKDCDPWTSGIISAPDQLMPYFVMELFSTMPGLP. The helical transmembrane segment at 335–357 threads the bilayer; the sequence is GLFVACAFSGTLSTVAASINALA. Over 358–385 the chain is Cytoplasmic; the sequence is TVTFEDFVKSCFPRLSDKLSTWISKGLC. The helical transmembrane segment at 386 to 406 threads the bilayer; the sequence is LLFGVICTSTAVAASLMGGVI. The Extracellular segment spans residues 407–411; sequence QAALS. A helical transmembrane segment spans residues 412–432; that stretch reads IHGMCGGPMLGLFSLGILFPF. Residues 433–437 are Cytoplasmic-facing; it reads VNWKG. A helical transmembrane segment spans residues 438-458; sequence ALAGLLTGILLSFWVAIGAFI. Residues 459-507 lie on the Extracellular side of the membrane; sequence YPAPASKTWPLPLSTDQCGLSNVTESVPPVLSSRPAIAETWYALSYLHY. Asn-480 carries an N-linked (GlcNAc...) asparagine glycan. A helical membrane pass occupies residues 508 to 528; the sequence is STVGCLGCIAAGVIISFLTGL. Residues 529–617 lie on the Cytoplasmic side of the membrane; that stretch reads QKGKDIPPLL…NMALEKITHF (89 aa).

Belongs to the sodium:solute symporter (SSF) (TC 2.A.21) family.

It localises to the apical cell membrane. It catalyses the reaction (S)-lactate(out) + Na(+)(out) = (S)-lactate(in) + Na(+)(in). It carries out the reaction nicotinate(out) + Na(+)(out) = nicotinate(in) + Na(+)(in). The catalysed reaction is pyruvate(out) + Na(+)(out) = pyruvate(in) + Na(+)(in). The enzyme catalyses propanoate(out) + Na(+)(out) = propanoate(in) + Na(+)(in). It catalyses the reaction butanoate(out) + Na(+)(out) = butanoate(in) + Na(+)(in). It carries out the reaction acetoacetate(out) + Na(+)(out) = acetoacetate(in) + Na(+)(in). Functionally, acts as an electroneutral and low-affinity sodium (Na(+))-dependent sodium-coupled solute transporter. Catalyzes the transport across the plasma membrane of many monocarboxylates such as lactate, pyruvate, nicotinate, propionate, butyrate and beta-D-hydroxybutyrate. May be responsible for the first step of reabsorption of monocarboxylates from the lumen of the proximal tubule of the kidney and the small intestine. May play also a role in monocarboxylates transport in the retina. Mediates electroneutral uptake of lactate, with a stoichiometry of 2 Na(+) for each lactate. This Bos taurus (Bovine) protein is Sodium-coupled monocarboxylate transporter 2 (SLC5A12).